The chain runs to 229 residues: Small ribosomal subunit protein uS2c (229 aa).

This sequence belongs to the universal ribosomal protein uS2 family.

The protein localises to the plastid. It localises to the chloroplast. This is Small ribosomal subunit protein uS2c (rps2) from Trieres chinensis (Marine centric diatom).